Consider the following 1007-residue polypeptide: Lysosomal alpha-mannosidase (1007 aa).

2 stretches are compositionally biased toward low complexity: residues 1 to 10 (MGADARPLGV) and 19 to 28 (AARPGTSSRA). Positions 1–30 (MGADARPLGVRAGGGGRGAARPGTSSRALP) are disordered. The signal sequence occupies residues 1–50 (MGADARPLGVRAGGGGRGAARPGTSSRALPPPLPPLSFLLLLLAAPGARA). 2 cysteine pairs are disulfide-bonded: cysteine 56/cysteine 360 and cysteine 269/cysteine 274. Zn(2+) is bound by residues histidine 73 and aspartate 75. Asparagine 134 carries N-linked (GlcNAc...) asparagine glycosylation. Aspartate 197 contributes to the Zn(2+) binding site. Aspartate 197 serves as the catalytic Nucleophile. Residues asparagine 311, asparagine 347, and asparagine 369 are each glycosylated (N-linked (GlcNAc...) asparagine). 2 disulfides stabilise this stretch: cysteine 414/cysteine 474 and cysteine 495/cysteine 503. Zn(2+) is bound at residue histidine 448. N-linked (GlcNAc...) asparagine glycans are attached at residues asparagine 499, asparagine 543, asparagine 643, asparagine 649, asparagine 690, asparagine 764, and asparagine 927.

This sequence belongs to the glycosyl hydrolase 38 family. The cofactor is Zn(2+). Processed into 3 peptides of 72 kDa, 41 kDa and 12 kDa.

The protein resides in the lysosome. The catalysed reaction is Hydrolysis of terminal, non-reducing alpha-D-mannose residues in alpha-D-mannosides.. In terms of biological role, necessary for the catabolism of N-linked carbohydrates released during glycoprotein turnover. The polypeptide is Lysosomal alpha-mannosidase (MAN2B1) (Felis catus (Cat)).